The following is a 336-amino-acid chain: Large ribosomal subunit protein uL3 (336 aa).

The segment at 1–34 is disordered; sequence MVRHHQPRKGSVAFSPRKRAAKETPRIKSWPQND.

Belongs to the universal ribosomal protein uL3 family. Part of the 50S ribosomal subunit. Forms a cluster with proteins L14 and L24e.

In terms of biological role, one of the primary rRNA binding proteins, it binds directly near the 3'-end of the 23S rRNA, where it nucleates assembly of the 50S subunit. The chain is Large ribosomal subunit protein uL3 from Methanobrevibacter smithii (strain ATCC 35061 / DSM 861 / OCM 144 / PS).